The chain runs to 638 residues: Sodium- and chloride-dependent neutral and basic amino acid transporter B(0+) (638 aa).

Residues 1–44 are Cytoplasmic-facing; it reads MDRLKCPNFFKCRQKEKVTASSENFHVGENDENQERGNWSKKSD. 3 helical membrane-spanning segments follow: residues 45 to 65, 72 to 92, and 110 to 130; these read YLLSMVGYAVGLGNVWRFPYL, GAFLIPYAIMLALAGLPLFFL, and ILPLFQGVGITMVLISVFVAI. The Extracellular segment spans residues 131 to 230; it reads YYNVIIAYSL…RSSGMDETGV (100 aa). 6 N-linked (GlcNAc...) asparagine glycosylation sites follow: asparagine 155, asparagine 163, asparagine 174, asparagine 185, asparagine 193, and asparagine 198. Transmembrane regions (helical) follow at residues 231–251 and 257–277; these read VVWYLALCLLLAWLIVGAALF and SGKVVYFTALFPYVVLLILLI. Asparagine 298 carries N-linked (GlcNAc...) asparagine glycosylation. The next 7 membrane-spanning stretches (helical) occupy residues 311-331, 344-364, 395-415, 453-473, 476-496, 524-544, and 559-579; these read AATQIFYSLSVAWGGLVALSS, IIVCLTNCLTSVFAGFAIFSI, LAQLPAGPFWSILFFFMLLTL, ILFLLGLLCVTQAGIYWVHLI, FCAGWGILIAAILEIAGIIWI, CWFVITPILLSAILVWSLVKF, and VALGWCMIIFCIIWIPIMAII. Over 580-638 the chain is Cytoplasmic; sequence KIVQAEGNILQRIISCCRPASNWGPYLEKHRGERYRDMAEPAKETDHEIPTISGSTKPE. Basic and acidic residues predominate over residues 618 to 628; the sequence is AEPAKETDHEI. A disordered region spans residues 618 to 638; it reads AEPAKETDHEIPTISGSTKPE.

Belongs to the sodium:neurotransmitter symporter (SNF) (TC 2.A.22) family. SLC6A14 subfamily. In terms of tissue distribution, expressed in the distal region of the intestinal tract: cecum and colon.

It is found in the membrane. The protein resides in the apical cell membrane. It catalyses the reaction glycine(out) + chloride(out) + 2 Na(+)(out) = glycine(in) + chloride(in) + 2 Na(+)(in). The catalysed reaction is L-leucine(out) + chloride(out) + 2 Na(+)(out) = L-leucine(in) + chloride(in) + 2 Na(+)(in). The enzyme catalyses L-glutamine(out) + chloride(out) + 2 Na(+)(out) = L-glutamine(in) + chloride(in) + 2 Na(+)(in). It carries out the reaction L-arginine(out) + chloride(out) + 2 Na(+)(out) = L-arginine(in) + chloride(in) + 2 Na(+)(in). It catalyses the reaction (R)-carnitine(out) + chloride(out) + 2 Na(+)(out) = (R)-carnitine(in) + chloride(in) + 2 Na(+)(in). The catalysed reaction is O-propanoyl-(R)-carnitine(out) + chloride(out) + 2 Na(+)(out) = O-propanoyl-(R)-carnitine(in) + chloride(in) + 2 Na(+)(in). The enzyme catalyses L-isoleucine(out) + chloride(out) + 2 Na(+)(out) = L-isoleucine(in) + chloride(in) + 2 Na(+)(in). It carries out the reaction L-methionine(out) + chloride(out) + 2 Na(+)(out) = L-methionine(in) + chloride(in) + 2 Na(+)(in). It catalyses the reaction L-valine(out) + chloride(out) + 2 Na(+)(out) = L-valine(in) + chloride(in) + 2 Na(+)(in). The catalysed reaction is L-alanine(out) + chloride(out) + 2 Na(+)(out) = L-alanine(in) + chloride(in) + 2 Na(+)(in). The enzyme catalyses L-serine(out) + chloride(out) + 2 Na(+)(out) = L-serine(in) + chloride(in) + 2 Na(+)(in). It carries out the reaction L-cysteine(out) + chloride(out) + 2 Na(+)(out) = L-cysteine(in) + chloride(in) + 2 Na(+)(in). It catalyses the reaction L-asparagine(out) + chloride(out) + 2 Na(+)(out) = L-asparagine(in) + chloride(in) + 2 Na(+)(in). The catalysed reaction is L-threonine(out) + chloride(out) + 2 Na(+)(out) = L-threonine(in) + chloride(in) + 2 Na(+)(in). The enzyme catalyses L-phenylalanine(out) + chloride(out) + 2 Na(+)(out) = L-phenylalanine(in) + chloride(in) + 2 Na(+)(in). It carries out the reaction L-tryptophan(out) + chloride(out) + 2 Na(+)(out) = L-tryptophan(in) + chloride(in) + 2 Na(+)(in). It catalyses the reaction L-tyrosine(out) + chloride(out) + 2 Na(+)(out) = L-tyrosine(in) + chloride(in) + 2 Na(+)(in). The catalysed reaction is L-histidine(out) + chloride(out) + 2 Na(+)(out) = L-histidine(in) + chloride(in) + 2 Na(+)(in). The enzyme catalyses L-lysine(out) + chloride(out) + 2 Na(+)(out) = L-lysine(in) + chloride(in) + 2 Na(+)(in). It carries out the reaction O-butanoyl-(R)-carnitine(out) + chloride(out) + 2 Na(+)(out) = O-butanoyl-(R)-carnitine(in) + chloride(in) + 2 Na(+)(in). Its function is as follows. Amino acid transporter that plays an important role in the absorption of amino acids in the intestinal tract. Mediates the uptake of a broad range of neutral and cationic amino acids (with the exception of proline) in a Na(+)/Cl(-)-dependent manner. Transports non-alpha-amino acids such as beta-alanine with low affinity, and has a higher affinity for dipolar and cationic amino acids such as leucine and lysine. Can also transport carnitine, butyrylcarnitine and propionylcarnitine coupled to the transmembrane gradients of Na(+) and Cl(-). The polypeptide is Sodium- and chloride-dependent neutral and basic amino acid transporter B(0+) (Mus musculus (Mouse)).